Reading from the N-terminus, the 168-residue chain is SPbeta prophage-derived uncharacterized protein YomW (168 aa).

In Bacillus subtilis (strain 168), this protein is SPbeta prophage-derived uncharacterized protein YomW (yomW).